A 293-amino-acid chain; its full sequence is MTSSYVGRFAPTPSGYLHFGSLVAAVASYLDARAVGGRWLVRMEDLDPPREVPGAQQAILETLERYGFEWDGAVERQSERFPAYAAVVEQLLRSGLAYACTCSRKQLEGFAGIYPGFCRDAGHAREDAAIRLRVPELEYRFVDRVQGEVRQHLGREVGDFVIQRRDGLYAYQLAVVLDDAWQGITDIVRGADLLDSTPRQLYLQELLGLSQPRYLHVPLIVQPDGHKLGKSYRSPPLPAEQAAAPLTRALRALGQRPPAELAQASASEALAWGVAHWDATRIPRCATLPEERL.

L-glutamate is bound by residues 8-12 (RFAPT) and E44. The 'HIGH' region motif lies at 11–21 (PTPSGYLHFGS). Residues C100, C102, Y114, and C118 each contribute to the Zn(2+) site. Positions 171 and 189 each coordinate L-glutamate. Positions 227-231 (KLGKS) match the 'KMSKS' region motif. K230 is an ATP binding site.

This sequence belongs to the class-I aminoacyl-tRNA synthetase family. GluQ subfamily. Requires Zn(2+) as cofactor.

In terms of biological role, catalyzes the tRNA-independent activation of glutamate in presence of ATP and the subsequent transfer of glutamate onto a tRNA(Asp). Glutamate is transferred on the 2-amino-5-(4,5-dihydroxy-2-cyclopenten-1-yl) moiety of the queuosine in the wobble position of the QUC anticodon. This Pseudomonas aeruginosa (strain ATCC 15692 / DSM 22644 / CIP 104116 / JCM 14847 / LMG 12228 / 1C / PRS 101 / PAO1) protein is Glutamyl-Q tRNA(Asp) synthetase.